The following is a 65-amino-acid chain: Large ribosomal subunit protein bL35 (65 aa).

The tract at residues 1 to 30 (MPKMKTVSGAAKRFKKTGSGRFKSKQSHLR) is disordered. Basic residues predominate over residues 12–30 (KRFKKTGSGRFKSKQSHLR).

This sequence belongs to the bacterial ribosomal protein bL35 family.

The chain is Large ribosomal subunit protein bL35 from Alteromonas mediterranea (strain DSM 17117 / CIP 110805 / LMG 28347 / Deep ecotype).